A 353-amino-acid chain; its full sequence is ATPase GET3 (353 aa).

26 to 33 (KGGVGKTT) serves as a coordination point for ATP. Asp57 is an active-site residue. ATP contacts are provided by Glu244 and Asn271. Zn(2+)-binding residues include Cys284 and Cys287.

Belongs to the arsA ATPase family. As to quaternary structure, homodimer. Component of the Golgi to ER traffic (GET) complex, which is composed of GET1, GET2 and GET3. Within the complex, GET1 and GET2 form a heterotetramer which is stabilized by phosphatidylinositol binding and which binds to the GET3 homodimer. Interacts with the chloride channel protein GEF1.

It is found in the cytoplasm. Its subcellular location is the endoplasmic reticulum. It localises to the golgi apparatus. ATPase required for the post-translational delivery of tail-anchored (TA) proteins to the endoplasmic reticulum. Recognizes and selectively binds the transmembrane domain of TA proteins in the cytosol. This complex then targets to the endoplasmic reticulum by membrane-bound receptors GET1 and GET2, where the tail-anchored protein is released for insertion. This process is regulated by ATP binding and hydrolysis. ATP binding drives the homodimer towards the closed dimer state, facilitating recognition of newly synthesized TA membrane proteins. ATP hydrolysis is required for insertion. Subsequently, the homodimer reverts towards the open dimer state, lowering its affinity for the GET1-GET2 receptor, and returning it to the cytosol to initiate a new round of targeting. Cooperates with the HDEL receptor ERD2 to mediate the ATP-dependent retrieval of resident ER proteins that contain a C-terminal H-D-E-L retention signal from the Golgi to the ER. Involved in low-level resistance to the oxyanions arsenite and arsenate, and in heat tolerance. This chain is ATPase GET3, found in Zygosaccharomyces rouxii (strain ATCC 2623 / CBS 732 / NBRC 1130 / NCYC 568 / NRRL Y-229).